The chain runs to 565 residues: uncharacterized protein (565 aa).

5 consecutive transmembrane segments (helical) span residues 4–26 (FVQF…AVWV), 33–55 (GYGL…VGAA), 68–90 (SLLY…VNAL), 97–119 (YAIL…TQFF), and 162–184 (ISAM…IILL). 2 consecutive RCK C-terminal domains span residues 210–295 (PNVD…LGPE) and 296–379 (VPDA…IFGV). 5 helical membrane-spanning segments follow: residues 389 to 411 (LLTL…PAFG), 415 to 432 (GLGN…VSSI), 453 to 472 (LGLI…DLLT), 482 to 504 (IFIV…GFHI), and 539 to 561 (WLGF…YFAM).

Belongs to the AAE transporter (TC 2.A.81) family.

The protein localises to the cell membrane. This is an uncharacterized protein from Bordetella bronchiseptica (strain ATCC BAA-588 / NCTC 13252 / RB50) (Alcaligenes bronchisepticus).